Here is a 222-residue protein sequence, read N- to C-terminus: 7-carboxy-7-deazaguanine synthase (222 aa).

Residues 16–18 (LQG) and arginine 31 contribute to the substrate site. Residues 22–222 (NLGRPAVFVR…IMAWGNARGK (201 aa)) enclose the Radical SAM core domain. Cysteine 35, cysteine 39, and cysteine 42 together coordinate [4Fe-4S] cluster. Threonine 44 provides a ligand contact to Mg(2+). Threonine 77 is a substrate binding site. Residues glycine 79 and 126-128 (SPK) each bind S-adenosyl-L-methionine.

It belongs to the radical SAM superfamily. 7-carboxy-7-deazaguanine synthase family. As to quaternary structure, homodimer. [4Fe-4S] cluster serves as cofactor. The cofactor is S-adenosyl-L-methionine. Requires Mg(2+) as cofactor.

The catalysed reaction is 6-carboxy-5,6,7,8-tetrahydropterin + H(+) = 7-carboxy-7-deazaguanine + NH4(+). Its pathway is purine metabolism; 7-cyano-7-deazaguanine biosynthesis. Functionally, catalyzes the complex heterocyclic radical-mediated conversion of 6-carboxy-5,6,7,8-tetrahydropterin (CPH4) to 7-carboxy-7-deazaguanine (CDG), a step common to the biosynthetic pathways of all 7-deazapurine-containing compounds. The chain is 7-carboxy-7-deazaguanine synthase from Pyrobaculum aerophilum (strain ATCC 51768 / DSM 7523 / JCM 9630 / CIP 104966 / NBRC 100827 / IM2).